Reading from the N-terminus, the 497-residue chain is Carboxypeptidase Y homolog ARB_02032 (497 aa).

A signal peptide spans M1–A18. N-linked (GlcNAc...) asparagine glycosylation occurs at N88. S204 is an active-site residue. N-linked (GlcNAc...) asparagine glycosylation is found at N263 and N393. D403 is a catalytic residue. N417 is a glycosylation site (N-linked (GlcNAc...) asparagine). The active site involves H469.

The protein belongs to the peptidase S10 family.

It is found in the secreted. The enzyme catalyses Release of a C-terminal amino acid with broad specificity.. Involved in degradation of small peptides. This is Carboxypeptidase Y homolog ARB_02032 from Arthroderma benhamiae (strain ATCC MYA-4681 / CBS 112371) (Trichophyton mentagrophytes).